The primary structure comprises 239 residues: 1-(5-phosphoribosyl)-5-[(5-phosphoribosylamino)methylideneamino] imidazole-4-carboxamide isomerase (239 aa).

Catalysis depends on aspartate 8, which acts as the Proton acceptor. Catalysis depends on aspartate 129, which acts as the Proton donor.

Belongs to the HisA/HisF family.

It localises to the cytoplasm. The enzyme catalyses 1-(5-phospho-beta-D-ribosyl)-5-[(5-phospho-beta-D-ribosylamino)methylideneamino]imidazole-4-carboxamide = 5-[(5-phospho-1-deoxy-D-ribulos-1-ylimino)methylamino]-1-(5-phospho-beta-D-ribosyl)imidazole-4-carboxamide. Its pathway is amino-acid biosynthesis; L-histidine biosynthesis; L-histidine from 5-phospho-alpha-D-ribose 1-diphosphate: step 4/9. The chain is 1-(5-phosphoribosyl)-5-[(5-phosphoribosylamino)methylideneamino] imidazole-4-carboxamide isomerase from Bacillus cereus (strain ZK / E33L).